The following is a 338-amino-acid chain: Lipoate-protein ligase A (338 aa).

Residues S29 to V216 enclose the BPL/LPL catalytic domain. ATP contacts are provided by residues R71, G76–F79, and K134. Residue K134 coordinates (R)-lipoate.

The protein belongs to the LplA family. Monomer.

The protein resides in the cytoplasm. It catalyses the reaction L-lysyl-[lipoyl-carrier protein] + (R)-lipoate + ATP = N(6)-[(R)-lipoyl]-L-lysyl-[lipoyl-carrier protein] + AMP + diphosphate + H(+). Its pathway is protein modification; protein lipoylation via exogenous pathway; protein N(6)-(lipoyl)lysine from lipoate: step 1/2. It participates in protein modification; protein lipoylation via exogenous pathway; protein N(6)-(lipoyl)lysine from lipoate: step 2/2. Functionally, catalyzes both the ATP-dependent activation of exogenously supplied lipoate to lipoyl-AMP and the transfer of the activated lipoyl onto the lipoyl domains of lipoate-dependent enzymes. In Yersinia pseudotuberculosis serotype O:1b (strain IP 31758), this protein is Lipoate-protein ligase A.